A 1120-amino-acid chain; its full sequence is ISWI chromatin-remodeling complex ATPase ISW2 (1120 aa).

The segment covering 1-16 has biased composition (basic and acidic residues); it reads MTTQQEEQRSDTKNSK. Disordered regions lie at residues 1 to 58 and 129 to 153; these read MTTQ…VEDR and LSKSHSTVSSSSRHHRKTEKEEDAE. 2 positions are modified to phosphoserine: serine 17 and serine 19. Basic and acidic residues predominate over residues 47–58; that stretch reads LSDKEIYTVEDR. The 166-residue stretch at 196–361 folds into the Helicase ATP-binding domain; sequence ISLHENKLSG…WALLNFLLPD (166 aa). ATP is bound at residue 209 to 216; sequence DEMGLGKT. The DEAH box signature appears at 312 to 315; it reads DEAH. Residues 494 to 645 enclose the Helicase C-terminal domain; it reads ILDKLLKRLK…QLVIQQGTGK (152 aa). Disordered stretches follow at residues 764–783 and 828–853; these read GGGSKSASKQTPQPKAPRAP and NEGSDAEEEEGEYKNAANTEGHKGHE. Serine 831 carries the post-translational modification Phosphoserine. The 53-residue stretch at 886–938 folds into the SANT domain; sequence KAFTNWNKRDFMAFINACAKYGRDDMENIKKSIDSKTPEEVEVYAKIFWERLK. The disordered stretch occupies residues 1062–1120; that stretch reads PDANKKKRSRTSATREDTPLSQNESTRASTVPNLPTTMVTNQKDTNDHVDKRTKIDQEA. Residue threonine 1079 is modified to Phosphothreonine. Residues 1080 to 1104 are compositionally biased toward polar residues; the sequence is PLSQNESTRASTVPNLPTTMVTNQK. Serine 1082 is modified (phosphoserine). A compositionally biased stretch (basic and acidic residues) spans 1105–1120; the sequence is DTNDHVDKRTKIDQEA.

The protein belongs to the SNF2/RAD54 helicase family. ISWI subfamily. In terms of assembly, component of the ISW2 complex, which at least consists of ISW2, ITC1, DLS1 and DPB4. May form a stable subcomplex with ITC1.

It is found in the nucleus. Catalytic component of the ISW2 complex, which acts in remodeling the chromatin by catalyzing an ATP-dependent alteration in the structure of nucleosomal DNA. The ISW2 complex is involved in coordinating transcriptional repression and in inheritance of telomeric silencing. It is involved in repression of MAT a-specific genes, INO1, and early meiotic genes during mitotic growth dependent upon transcription factor UME6 and in a parallel pathway to the RPD3-SIN3 histone deacetylase complex. The chain is ISWI chromatin-remodeling complex ATPase ISW2 (ISW2) from Saccharomyces cerevisiae (strain ATCC 204508 / S288c) (Baker's yeast).